A 385-amino-acid chain; its full sequence is Queuine tRNA-ribosyltransferase (385 aa).

Asp92 serves as the catalytic Proton acceptor. Residues 92-96 (DSGGF), Asp146, Gln188, and Gly215 contribute to the substrate site. The tract at residues 246-252 (GVGHPED) is RNA binding. The Nucleophile role is filled by Asp265. Residues 270 to 274 (TRTGR) are RNA binding; important for wobble base 34 recognition. Positions 303, 305, 308, and 334 each coordinate Zn(2+).

The protein belongs to the queuine tRNA-ribosyltransferase family. As to quaternary structure, homodimer. Within each dimer, one monomer is responsible for RNA recognition and catalysis, while the other monomer binds to the replacement base PreQ1. It depends on Zn(2+) as a cofactor.

The enzyme catalyses 7-aminomethyl-7-carbaguanine + guanosine(34) in tRNA = 7-aminomethyl-7-carbaguanosine(34) in tRNA + guanine. Its pathway is tRNA modification; tRNA-queuosine biosynthesis. Its function is as follows. Catalyzes the base-exchange of a guanine (G) residue with the queuine precursor 7-aminomethyl-7-deazaguanine (PreQ1) at position 34 (anticodon wobble position) in tRNAs with GU(N) anticodons (tRNA-Asp, -Asn, -His and -Tyr). Catalysis occurs through a double-displacement mechanism. The nucleophile active site attacks the C1' of nucleotide 34 to detach the guanine base from the RNA, forming a covalent enzyme-RNA intermediate. The proton acceptor active site deprotonates the incoming PreQ1, allowing a nucleophilic attack on the C1' of the ribose to form the product. After dissociation, two additional enzymatic reactions on the tRNA convert PreQ1 to queuine (Q), resulting in the hypermodified nucleoside queuosine (7-(((4,5-cis-dihydroxy-2-cyclopenten-1-yl)amino)methyl)-7-deazaguanosine). In Thermus thermophilus (strain ATCC BAA-163 / DSM 7039 / HB27), this protein is Queuine tRNA-ribosyltransferase.